We begin with the raw amino-acid sequence, 346 residues long: Holliday junction branch migration complex subunit RuvB (346 aa).

The tract at residues 4–184 (TDRLIAPTAK…FGIVQRLEFY (181 aa)) is large ATPase domain (RuvB-L). ATP contacts are provided by residues Arg-24, Gly-65, Lys-68, Thr-69, Thr-70, 131–133 (EDF), Arg-174, Tyr-184, and Arg-221. Thr-69 lines the Mg(2+) pocket. Residues 185-255 (NVKDLTHIVA…LADKALNMLN (71 aa)) form a small ATPAse domain (RuvB-S) region. Positions 258–346 (ERGFDHMDRR…QESQGGEGIA (89 aa)) are head domain (RuvB-H). DNA contacts are provided by Arg-294, Arg-313, and Arg-318.

This sequence belongs to the RuvB family. Homohexamer. Forms an RuvA(8)-RuvB(12)-Holliday junction (HJ) complex. HJ DNA is sandwiched between 2 RuvA tetramers; dsDNA enters through RuvA and exits via RuvB. An RuvB hexamer assembles on each DNA strand where it exits the tetramer. Each RuvB hexamer is contacted by two RuvA subunits (via domain III) on 2 adjacent RuvB subunits; this complex drives branch migration. In the full resolvosome a probable DNA-RuvA(4)-RuvB(12)-RuvC(2) complex forms which resolves the HJ.

It localises to the cytoplasm. It catalyses the reaction ATP + H2O = ADP + phosphate + H(+). The RuvA-RuvB-RuvC complex processes Holliday junction (HJ) DNA during genetic recombination and DNA repair, while the RuvA-RuvB complex plays an important role in the rescue of blocked DNA replication forks via replication fork reversal (RFR). RuvA specifically binds to HJ cruciform DNA, conferring on it an open structure. The RuvB hexamer acts as an ATP-dependent pump, pulling dsDNA into and through the RuvAB complex. RuvB forms 2 homohexamers on either side of HJ DNA bound by 1 or 2 RuvA tetramers; 4 subunits per hexamer contact DNA at a time. Coordinated motions by a converter formed by DNA-disengaged RuvB subunits stimulates ATP hydrolysis and nucleotide exchange. Immobilization of the converter enables RuvB to convert the ATP-contained energy into a lever motion, pulling 2 nucleotides of DNA out of the RuvA tetramer per ATP hydrolyzed, thus driving DNA branch migration. The RuvB motors rotate together with the DNA substrate, which together with the progressing nucleotide cycle form the mechanistic basis for DNA recombination by continuous HJ branch migration. Branch migration allows RuvC to scan DNA until it finds its consensus sequence, where it cleaves and resolves cruciform DNA. In Cellvibrio japonicus (strain Ueda107) (Pseudomonas fluorescens subsp. cellulosa), this protein is Holliday junction branch migration complex subunit RuvB.